Here is a 188-residue protein sequence, read N- to C-terminus: GTP cyclohydrolase 1 (188 aa).

The Zn(2+) site is built by Cys-75, His-78, and Cys-146.

Belongs to the GTP cyclohydrolase I family. Toroid-shaped homodecamer, composed of two pentamers of five dimers.

It carries out the reaction GTP + H2O = 7,8-dihydroneopterin 3'-triphosphate + formate + H(+). It functions in the pathway cofactor biosynthesis; 7,8-dihydroneopterin triphosphate biosynthesis; 7,8-dihydroneopterin triphosphate from GTP: step 1/1. The chain is GTP cyclohydrolase 1 from Hahella chejuensis (strain KCTC 2396).